A 616-amino-acid polypeptide reads, in one-letter code: Adenylosuccinate synthetase 2 (616 aa).

Residues 1–26 form a disordered region; that stretch reads MDKQAERDQSAGPVKTPQETQPPAHN. Polar residues predominate over residues 17–26; the sequence is PQETQPPAHN. GTP contacts are provided by residues 87–93 and 117–119; these read GDEGKGK and GHT. The active-site Proton acceptor is Asp88. Residues Asp88 and Gly117 each contribute to the Mg(2+) site. Residues 88–91, 115–118, Thr202, Lys216, Gln328, Thr343, and Lys472 each bind IMP; these read DEGK and NAGH. His118 (proton donor) is an active-site residue. 468 to 474 contributes to the substrate binding site; it reads AVTKKPR. Residues Arg474 and 603–605 each bind GTP; that span reads GNG.

It belongs to the adenylosuccinate synthetase family. As to quaternary structure, homodimer. The cofactor is Mg(2+).

Its subcellular location is the cytoplasm. The catalysed reaction is IMP + L-aspartate + GTP = N(6)-(1,2-dicarboxyethyl)-AMP + GDP + phosphate + 2 H(+). It functions in the pathway purine metabolism; AMP biosynthesis via de novo pathway; AMP from IMP: step 1/2. In terms of biological role, plays an important role in the salvage pathway for purine nucleotide biosynthesis. Catalyzes the first committed step in the biosynthesis of AMP from IMP. The protein is Adenylosuccinate synthetase 2 of Trypanosoma cruzi (strain CL Brener).